Here is a 173-residue protein sequence, read N- to C-terminus: Bifunctional protein PyrR (173 aa).

The short motif at I93–T105 is the PRPP-binding element.

Belongs to the purine/pyrimidine phosphoribosyltransferase family. PyrR subfamily. In terms of assembly, homodimer and homohexamer; in equilibrium.

It carries out the reaction UMP + diphosphate = 5-phospho-alpha-D-ribose 1-diphosphate + uracil. In terms of biological role, regulates transcriptional attenuation of the pyrimidine nucleotide (pyr) operon by binding in a uridine-dependent manner to specific sites on pyr mRNA. This disrupts an antiterminator hairpin in the RNA and favors formation of a downstream transcription terminator, leading to a reduced expression of downstream genes. Functionally, also displays a weak uracil phosphoribosyltransferase activity which is not physiologically significant. This Streptococcus equi subsp. zooepidemicus (strain H70) protein is Bifunctional protein PyrR.